A 227-amino-acid polypeptide reads, in one-letter code: Nitrobenzene nitroreductase (227 aa).

Residue 14-18 coordinates FMN; that stretch reads RRAKR. The NADP(+) site is built by S44 and I109. FMN-binding positions include 172–173 and K215; that span reads VF.

Belongs to the nitroreductase family. As to quaternary structure, monomer. It depends on FMN as a cofactor.

The catalysed reaction is N-phenylhydroxylamine + 2 NADP(+) + H2O = nitrobenzene + 2 NADPH + 2 H(+). It functions in the pathway xenobiotic degradation; nitrobenzene degradation. Inhibited by dicumarol, p-hydroxymercuribenzoate and salicyl hydroxamate. Functionally, involved in the biodegradation of nitroaromatic compounds. Catalyzes the two-electron reduction of nitrobenzene (NB) to produce a nitrosobenzene (NOB) intermediate, which is immediately reduced to hydroxylaminobenzene (HAB) by a second two-electron transfer. Also active on menadione and nitrofurazone. Replacing NADPH with NADH results in a 4-fold decrease in the reaction rate. This chain is Nitrobenzene nitroreductase, found in Ectopseudomonas oleovorans (Pseudomonas oleovorans).